A 208-amino-acid chain; its full sequence is ATP-dependent Clp protease proteolytic subunit 2 (208 aa).

Ser102 acts as the Nucleophile in catalysis. The active site involves His127.

The protein belongs to the peptidase S14 family. As to quaternary structure, fourteen ClpP subunits assemble into 2 heptameric rings which stack back to back to give a disk-like structure with a central cavity, resembling the structure of eukaryotic proteasomes.

It localises to the cytoplasm. The enzyme catalyses Hydrolysis of proteins to small peptides in the presence of ATP and magnesium. alpha-casein is the usual test substrate. In the absence of ATP, only oligopeptides shorter than five residues are hydrolyzed (such as succinyl-Leu-Tyr-|-NHMec, and Leu-Tyr-Leu-|-Tyr-Trp, in which cleavage of the -Tyr-|-Leu- and -Tyr-|-Trp bonds also occurs).. Its function is as follows. Cleaves peptides in various proteins in a process that requires ATP hydrolysis. Has a chymotrypsin-like activity. Plays a major role in the degradation of misfolded proteins. The chain is ATP-dependent Clp protease proteolytic subunit 2 from Chelativorans sp. (strain BNC1).